Reading from the N-terminus, the 753-residue chain is MDPTHQPFRLYAEVIVNANINKILDYGIPAELENLVTVGSVVKVPLQRKLTNDKYKIAIVLKIKSSSDFVHVIQPILDISYEGITLPQDLIDLIFWISQYYFCPLGSAVSLFLPTVYAQTHSTKHQNNVFLGQNAERTQEILKTLDNPQQIAVLRKLLKTTKPLTPPELMRKTEVSAKTLDALVKQKFIRIVDSADLEIQDEQLHYFLPDPPTLNQEQLDAVNTISQSLVAEQFQTCLLFGVTGSGKTEVYLQVIRKARALGKSVILLVPEVALTIQTLSFFKMHFGSEVGVLHYKLSDSERTQTWYKASRGLINIIIGPRSAIFCPIQNLGLIIVDEEHDSAYKQSDLPPFYQARDVAVMRGKMTNATVILGSATPSLESYTNALSKKYTLSVLSKRASTSTPTKVFLIDMNLEMEKTRKKPFFSQTVIRSIEQRLEVGEQTIIFFNRRGFHTNVSCSSCKYTLKCPHCDMILTFHKTERILLCHLCNTRLSKPITSCPQCLGTMTLQYRGAGTEKIETLLREFFPTARTIRLDSDTTRFRGSHDALVKQFATGKADILIGTQMIAKGMHFPAVTLSVVLSGDSGLYIPDFRAAEQVFQLITQVTGRSGRSHLPGEVLIQTFLPQNSTISHALAQDFPAFYKEEILGRKVCNYPPFTRLIRCIFLGKCSDYTLKETQRVHTLIKQNLDSQASLMEISPCGHFKVKDLFHYQFLIKTRNILVANKQIQEALAAAKLSSKVRCIVDVDPVTTFF.

In terms of domain architecture, Helicase ATP-binding spans 228–395 (SLVAEQFQTC…LSKKYTLSVL (168 aa)). Residue 241–248 (GVTGSGKT) coordinates ATP. Residues 337 to 340 (DEEH) carry the DEAH box motif. Zn(2+) contacts are provided by Cys-458, Cys-461, Cys-467, Cys-470, Cys-485, Cys-488, Cys-499, and Cys-502. The region spanning 491 to 646 (RLSKPITSCP…DFPAFYKEEI (156 aa)) is the Helicase C-terminal domain.

This sequence belongs to the helicase family. PriA subfamily. Component of the replication restart primosome. Zn(2+) is required as a cofactor.

The catalysed reaction is Couples ATP hydrolysis with the unwinding of duplex DNA by translocating in the 3'-5' direction.. It carries out the reaction ATP + H2O = ADP + phosphate + H(+). In terms of biological role, initiates the restart of stalled replication forks, which reloads the replicative helicase on sites other than the origin of replication. Recognizes and binds to abandoned replication forks and remodels them to uncover a helicase loading site. Promotes assembly of the primosome at these replication forks. The chain is Replication restart protein PriA from Chlamydia trachomatis serovar D (strain ATCC VR-885 / DSM 19411 / UW-3/Cx).